Consider the following 281-residue polypeptide: Very long chain fatty acid elongase 7 (281 aa).

The residue at position 2 (Ala2) is an N-acetylalanine. The Lumenal portion of the chain corresponds to 2–27; it reads AFSDLTSRTVRFYDNWIKDADPRVED. Residues 28–48 form a helical membrane-spanning segment; the sequence is YLLMSSPLPQTIILGLYVYFV. The Cytoplasmic segment spans residues 49–72; that stretch reads TSLGPKLMENRKPFELKKAMITYN. Residues 73–93 traverse the membrane as a helical segment; that stretch reads FFIVLFSVYMCYEFVMSGWGT. The Lumenal segment spans residues 94-115; sequence GYSFRCDIVDYSQSPRAMRMVH. Cys99 and Cys231 are oxidised to a cystine. A helical transmembrane segment spans residues 116–136; sequence TCWLYYFSKFIELLDTIFFVL. The 3-oxoeicosanoyl-CoA site is built by Lys124, Arg137, Lys139, Gln142, and His147. Residues 137–142 lie on the Cytoplasmic side of the membrane; sequence RKKNSQ. A helical membrane pass occupies residues 143–162; sequence VTFLHVFHHTIMPWTWWFGV. The HxxHH motif motif lies at 147-151; that stretch reads HVFHH. His150 acts as the Nucleophile in catalysis. Over 163 to 171 the chain is Lumenal; it reads KFAAGGLGT. The chain crosses the membrane as a helical span at residues 172 to 194; it reads FHAFLNTAVHVVMYSYYGLCAMG. Positions 187, 204, 208, and 211 each coordinate 3-oxoeicosanoyl-CoA. The Cytoplasmic portion of the chain corresponds to 195–206; that stretch reads PAYQKYLWWKKH. Residues 207–227 traverse the membrane as a helical segment; that stretch reads LTSLQLVQFVLVTIHIGQIFF. Residues 228-236 are Lumenal-facing; it reads MEDCNYQYP. Residues 237 to 257 form a helical membrane-spanning segment; that stretch reads VFLYIIMSYGCIFLLLFLHFW. Topologically, residues 258–281 are cytoplasmic; the sequence is YRAYTKGQRLPKTLENGNCKSKRH. Arg266 is a binding site for 3-oxoeicosanoyl-CoA. A Di-lysine motif motif is present at residues 277-281; the sequence is KSKRH.

Belongs to the ELO family. ELOVL7 subfamily. As to quaternary structure, homodimer. Interacts with TECR.

It localises to the endoplasmic reticulum membrane. It carries out the reaction a very-long-chain acyl-CoA + malonyl-CoA + H(+) = a very-long-chain 3-oxoacyl-CoA + CO2 + CoA. The enzyme catalyses eicosanoyl-CoA + malonyl-CoA + H(+) = 3-oxodocosanoyl-CoA + CO2 + CoA. The catalysed reaction is (5Z,8Z,11Z,14Z)-eicosatetraenoyl-CoA + malonyl-CoA + H(+) = (7Z,10Z,13Z,16Z)-3-oxodocosatetraenoyl-CoA + CO2 + CoA. It catalyses the reaction (6Z,9Z,12Z)-octadecatrienoyl-CoA + malonyl-CoA + H(+) = (8Z,11Z,14Z)-3-oxoeicosatrienoyl-CoA + CO2 + CoA. It carries out the reaction (9Z,12Z)-octadecadienoyl-CoA + malonyl-CoA + H(+) = (11Z,14Z)-3-oxoicosa-11,14-dienoyl-CoA + CO2 + CoA. The enzyme catalyses (9Z)-octadecenoyl-CoA + malonyl-CoA + H(+) = 3-oxo-(11Z)-eicosenoyl-CoA + CO2 + CoA. The catalysed reaction is octadecanoyl-CoA + malonyl-CoA + H(+) = 3-oxoeicosanoyl-CoA + CO2 + CoA. It catalyses the reaction hexadecanoyl-CoA + malonyl-CoA + H(+) = 3-oxooctadecanoyl-CoA + CO2 + CoA. It carries out the reaction (9Z,12Z,15Z)-octadecatrienoyl-CoA + malonyl-CoA + H(+) = (11Z,14Z,17Z)-3-oxoeicosatrienoyl-CoA + CO2 + CoA. It functions in the pathway lipid metabolism; fatty acid biosynthesis. Catalyzes the first and rate-limiting reaction of the four reactions that constitute the long-chain fatty acids elongation cycle. This endoplasmic reticulum-bound enzymatic process allows the addition of 2 carbons to the chain of long- and very long-chain fatty acids (VLCFAs) per cycle. Condensing enzyme with higher activity toward C18 acyl-CoAs, especially C18:3(n-3) acyl-CoAs and C18:3(n-6)-CoAs. Also active toward C20:4-, C18:0-, C18:1-, C18:2- and C16:0-CoAs, and weakly toward C20:0-CoA. Little or no activity toward C22:0-, C24:0-, or C26:0-CoAs. May participate in the production of saturated and polyunsaturated VLCFAs of different chain lengths that are involved in multiple biological processes as precursors of membrane lipids and lipid mediators. The sequence is that of Very long chain fatty acid elongase 7 from Mus musculus (Mouse).